The chain runs to 330 residues: MELLSTPHSIEINNITCDSFRISWAMEDSDLERVTHYFIDLNKKENKNSNKFKHRDVPTKLVAKAVPLPMTVRGHWFLSPRTEYSVAVQTAVKQSDGEYLVSGWSETVEFCTGDYAKEHLAQLQEKAEQIAGRMLRFSVFYRNHHKEYFQHARTHCGNVLQPYLKDNSGSHGSPTSGMLHGVFFSCNTEFNTGQPPQDSPYGRWRFQIPAQRLFNPSTNLYFADFYCMYTAYHYAILVLAPKGSLGDRFCRDRLPLLDIACNKFLTCSVEDGELIFRHAQDLILEIIYTEPVDLSLGTLGEISGHQLMSLSTADAKKDPSCKTCNISVGR.

Residues 6–115 (TPHSIEINNI…ETVEFCTGDY (110 aa)) form the Fibronectin type-III domain. Asn-14 and Asn-325 each carry an N-linked (GlcNAc...) asparagine glycan.

It belongs to the PHYHIP family. As to quaternary structure, interacts with PHYH and ADGRB1. In terms of tissue distribution, highly expressed in the brain.

In terms of biological role, its interaction with PHYH suggests a role in the development of the central system. The polypeptide is Phytanoyl-CoA hydroxylase-interacting protein (Phyhip) (Mus musculus (Mouse)).